The chain runs to 260 residues: MNPITPSEFRQSVRRGAFRGPTAGHCGPFAQANLAILPDAYAHDFLRFCQANPKACPLLGVGEPGAFRLDVLGDDLDIRTDVPSYNVYRDGRLTERVDSLEALWRDDFVAFAIGCSFSFEDMLAREGIALRHVEEGRNVPMYRTSIPNRRAGVFGGQLVVSMRPMRGADAIRAVQITSRFPGVHGAPIHLGDPRELGIADLGAPDFGDAVTIREGELPVFWACGVTPQTALMEAKLPLAIAHTPGHMLMTDITNASLAVF.

This sequence belongs to the D-glutamate cyclase family.

The chain is Putative hydro-lyase Bmul_5125/BMULJ_03391 from Burkholderia multivorans (strain ATCC 17616 / 249).